Consider the following 376-residue polypeptide: Succinate--CoA ligase [ADP-forming] subunit beta (376 aa).

Residues 9–237 (KEIFSKYGIP…PTEEEKVEAD (229 aa)) enclose the ATP-grasp domain. Residues K46, 53 to 55 (GRG), V95, and E100 each bind ATP. N192 and D206 together coordinate Mg(2+). Substrate contacts are provided by residues N257 and 314–316 (GIT).

Belongs to the succinate/malate CoA ligase beta subunit family. Heterotetramer of two alpha and two beta subunits. Mg(2+) is required as a cofactor.

It catalyses the reaction succinate + ATP + CoA = succinyl-CoA + ADP + phosphate. It carries out the reaction GTP + succinate + CoA = succinyl-CoA + GDP + phosphate. It functions in the pathway carbohydrate metabolism; tricarboxylic acid cycle; succinate from succinyl-CoA (ligase route): step 1/1. Its function is as follows. Succinyl-CoA synthetase functions in the citric acid cycle (TCA), coupling the hydrolysis of succinyl-CoA to the synthesis of either ATP or GTP and thus represents the only step of substrate-level phosphorylation in the TCA. The beta subunit provides nucleotide specificity of the enzyme and binds the substrate succinate, while the binding sites for coenzyme A and phosphate are found in the alpha subunit. In Bacteroides thetaiotaomicron (strain ATCC 29148 / DSM 2079 / JCM 5827 / CCUG 10774 / NCTC 10582 / VPI-5482 / E50), this protein is Succinate--CoA ligase [ADP-forming] subunit beta.